The primary structure comprises 559 residues: MGLCVRSSINIPYFHYAMIYLDNMGRLKVMESPSIQEQNETVFTTEVRERFLEILGAKVGYQPPMVRSIYDPQQPLGCLSYRQTKRDRNSPAHSMYGVPPSVQFSAPVEESPSCGSVDMVGLEIGDTPNVLDYYERSLKHFRQVNCRQILKTFIKFIEPRKQAKHPYNGGKPPAGAPPGKKGDPEKTKPEWWPANVVHKEPDHLRKDRTCNPSENLQCQVTLLTDLERLSLLIHIIRRLGRFGITTDQLQEIAHDCKRRLSDPHKLQILDEVFRVRRIEERYERGEVDANKIVYVVNRESNQKEKDGDSNVDPDQKHEQEDDNAREALPILHSEKNSTSPMSNSAEHTGMAAPSRPMNMGGDRNQLFPLPEWPSFGETPQDDRIFFPTTSKYTEDYASQQMPRTPATTALVSTNETHAAFDYMTQESITSSSPEQTSHHRQAPLPMQHSASLDPWTPTFRHNFFNPMVYSTAPRHAMSQATMLSQFPRSTTSHGQEMPHMAHGLPNLPQDRPSSMDGMSMRGPSFRTGFLSHPCDPSQQAPHSSGCGHPDSWTQNRPHV.

Disordered regions lie at residues 163–190 (AKHPYNGGKPPAGAPPGKKGDPEKTKPE), 298–351 (RESN…TGMA), 427–451 (SITSSSPEQTSHHRQAPLPMQHSAS), and 525–559 (FRTGFLSHPCDPSQQAPHSSGCGHPDSWTQNRPHV). Residues 169 to 179 (GGKPPAGAPPG) are compositionally biased toward low complexity. Composition is skewed to basic and acidic residues over residues 180–189 (KKGDPEKTKP) and 300–325 (SNQKEKDGDSNVDPDQKHEQEDDNAR). Polar residues predominate over residues 336-346 (NSTSPMSNSAE).

In terms of biological role, part of the subtelomeric hrmA-associated cluster (HAC) containing genes that alter the hyphal surface (such as reduced total chitin or increased beta-glucan exposure) and perturb inter-hyphal interactions within the developing biofilms, resulting in a loss of vertically aligned polarized growing filaments. Consequently, this hypoxia-typic morphotype (called H-MORPH) with altered biofilm architecture leads to increased hypoxia fitness, increased host inflammation, rapid disease progression, and mortality in a murine model of invasive aspergillosis. This Aspergillus fumigatus (strain CBS 144.89 / FGSC A1163 / CEA10) (Neosartorya fumigata) protein is Subtelomeric hrmA-associated cluster protein AFUB_079030.